Reading from the N-terminus, the 808-residue chain is Ribosome biogenesis protein BOP1 homolog (808 aa).

Low complexity-rich tracts occupy residues 1–25 (MTSP…LTPC) and 33–50 (ATSS…SSFD). The interval 1–55 (MTSPKGKPSPKRSAPAPATAALTPCAEERTEGATSSASASASSHISSSFDSPRDD) is disordered. WD repeat units follow at residues 430-469 (GHTA…LMKR), 640-680 (KFSE…RRFK), 682-720 (SGGV…KPYK), 724-766 (SHKG…DYNK), and 777-808 (KHQR…AWTE).

It belongs to the WD repeat BOP1/ERB1 family.

The protein resides in the nucleus. It localises to the nucleolus. The protein localises to the nucleoplasm. Its function is as follows. Required for maturation of ribosomal RNAs and formation of the large ribosomal subunit. This Leishmania major protein is Ribosome biogenesis protein BOP1 homolog.